The sequence spans 211 residues: MADS-box protein AGL72 (211 aa).

An MADS-box domain is found at 1-61 (MVRGKIEIKK…GRLYEFASSD (61 aa)). The K-box domain maps to 88-187 (VQGLKKEMVT…LCQVGERPMG (100 aa)).

It localises to the nucleus. Its function is as follows. MADS-box transcription factor that acts with AGL42 and AGL71 in the control of flowering time. Promotes flowering at the shoot apical and axillary meristems. Seems to act through a gibberellin-dependent pathway. Interacts genetically with SOC1 and its expression is directly regulated by SOC1. This Arabidopsis thaliana (Mouse-ear cress) protein is MADS-box protein AGL72 (AGL72).